The primary structure comprises 603 residues: Grainyhead-like protein 3 homolog (603 aa).

The interval 30–95 (EAWKTYLENP…QGKKFYHSMD (66 aa)) is transcription activation. One can recognise a Grh/CP2 DB domain in the interval 226–461 (GLKSDFEYTL…DLETQPVLFI (236 aa)).

Belongs to the grh/CP2 family. Grainyhead subfamily. In terms of assembly, homodimer, also forms heterodimers with GRHL1 and GRHL2. Interacts with LMO4.

Its subcellular location is the nucleus. Its function is as follows. Transcription factor playing important roles in primary neurulation and in the differentiation of stratified epithelia of both ectodermal and endodermal origin. Binds directly to the consensus DNA sequence 5'-AACCGGTT-3' acting as an activator and repressor on distinct target genes. Essential for epidermal differentiation and barrier formation at the end of embryogenesis with TGM3 as critical direct target. Exhibits functional redundancy with GRHL2 in epidermal morphogenetic events such as eyelid fusion and epidermal wound repair. Despite being dispensable during normal epidermal homeostasis in the adulthood, is again required for barrier repair after immune-mediated epidermal damage, regulates distinct gene batteries in embryonic epidermal differentiation and adult epidermal barrier reformation after injury. Plays unique and cooperative roles with GRHL2 in establishing distinct zones of primary neurulation. Essential for spinal closure, functions cooperatively with GRHL2 in closure 2 (forebrain/midbrain boundary) and posterior neuropore closure. Also required for proper development of the oral periderm. No genetic interaction with GRHL1, no functional cooperativity due to diverse target gene selectivity. The protein is Grainyhead-like protein 3 homolog of Mus musculus (Mouse).